Here is a 317-residue protein sequence, read N- to C-terminus: Transaldolase (317 aa).

The active-site Schiff-base intermediate with substrate is K126.

Belongs to the transaldolase family. Type 1 subfamily. In terms of assembly, homodimer.

Its subcellular location is the cytoplasm. The enzyme catalyses D-sedoheptulose 7-phosphate + D-glyceraldehyde 3-phosphate = D-erythrose 4-phosphate + beta-D-fructose 6-phosphate. It functions in the pathway carbohydrate degradation; pentose phosphate pathway; D-glyceraldehyde 3-phosphate and beta-D-fructose 6-phosphate from D-ribose 5-phosphate and D-xylulose 5-phosphate (non-oxidative stage): step 2/3. In terms of biological role, transaldolase is important for the balance of metabolites in the pentose-phosphate pathway. This is Transaldolase from Burkholderia thailandensis (strain ATCC 700388 / DSM 13276 / CCUG 48851 / CIP 106301 / E264).